We begin with the raw amino-acid sequence, 427 residues long: Gamma-glutamyl phosphate reductase (427 aa).

This sequence belongs to the gamma-glutamyl phosphate reductase family.

Its subcellular location is the cytoplasm. The enzyme catalyses L-glutamate 5-semialdehyde + phosphate + NADP(+) = L-glutamyl 5-phosphate + NADPH + H(+). It participates in amino-acid biosynthesis; L-proline biosynthesis; L-glutamate 5-semialdehyde from L-glutamate: step 2/2. Functionally, catalyzes the NADPH-dependent reduction of L-glutamate 5-phosphate into L-glutamate 5-semialdehyde and phosphate. The product spontaneously undergoes cyclization to form 1-pyrroline-5-carboxylate. This chain is Gamma-glutamyl phosphate reductase, found in Anaeromyxobacter sp. (strain K).